The sequence spans 147 residues: Hemoglobin subunit gamma-1 (147 aa).

Gly2 bears the N-acetylglycine mark. A Globin domain is found at 3 to 147 (HFTEEDKATI…VASALSSRYH (145 aa)). The residue at position 13 (Thr13) is a Phosphothreonine. Phosphoserine occurs at positions 45, 51, and 53. Lys60 bears the N6-acetyllysine mark. Heme b is bound at residue His64. Lys83 carries the N6-acetyllysine modification. Heme b is bound at residue His93. Cys94 carries the post-translational modification S-nitrosocysteine. Residue Ser140 is modified to Phosphoserine.

The protein belongs to the globin family. As to quaternary structure, heterotetramer of two alpha chains and two gamma chains in fetal hemoglobin (Hb F). The ratio of gamma-G to gamma-A chains in is approximately 2:1 in infant chimpanzee, and 1:2 in the adult. As to expression, red blood cells.

Gamma chains make up the fetal hemoglobin F, in combination with alpha chains. This Pan troglodytes (Chimpanzee) protein is Hemoglobin subunit gamma-1 (HBG1).